A 480-amino-acid chain; its full sequence is Cysteine--tRNA ligase (480 aa).

Residue Cys-29 participates in Zn(2+) binding. The short motif at 31–41 is the 'HIGH' region element; it reads ITVYDYCHLGH. Residues Cys-215, His-240, and Glu-244 each contribute to the Zn(2+) site. The 'KMSKS' region signature appears at 272–276; that stretch reads KMSKS. An ATP-binding site is contributed by Lys-275.

This sequence belongs to the class-I aminoacyl-tRNA synthetase family. In terms of assembly, monomer. It depends on Zn(2+) as a cofactor.

It localises to the cytoplasm. The enzyme catalyses tRNA(Cys) + L-cysteine + ATP = L-cysteinyl-tRNA(Cys) + AMP + diphosphate. The chain is Cysteine--tRNA ligase from Microcystis aeruginosa (strain NIES-843 / IAM M-2473).